Reading from the N-terminus, the 29-residue chain is Cyclotide mden-F (29 aa).

Residues 1 to 29 constitute a cross-link (cyclopeptide (Gly-Asn)); it reads GLPICGETCFFGKCNTPKCTCINPICYKN. 3 disulfide bridges follow: Cys5–Cys19, Cys9–Cys21, and Cys14–Cys26.

This sequence belongs to the cyclotide family. Post-translationally, this is a cyclic peptide.

Probably participates in a plant defense mechanism. This Melicytus dentatus (Tree violet) protein is Cyclotide mden-F.